Here is a 364-residue protein sequence, read N- to C-terminus: DNA replication and repair protein RecF (364 aa).

ATP is bound at residue 30–37 (GENGSGKT).

The protein belongs to the RecF family.

It is found in the cytoplasm. Functionally, the RecF protein is involved in DNA metabolism; it is required for DNA replication and normal SOS inducibility. RecF binds preferentially to single-stranded, linear DNA. It also seems to bind ATP. This chain is DNA replication and repair protein RecF, found in Xylella fastidiosa (strain M12).